Here is a 337-residue protein sequence, read N- to C-terminus: MQSIPIKNVGESRLVDPFQRQYYYLRLSITDQCNFRCTYCLPDGYQPEANKPSFLTLKEITHLAQAFAEMGTEKIRLTGGEPTLRKDFISIAESIANIEGIRQLAVTTNGYRMAKDVADWKKVGITSINVSVDSLDPKMFHQITGINKFDDVMRGIDRAFEAGYNKVKVNSVLMKNLNDKEFEQFLVWVKDRPIQMRFIELMQTGEMDSFFDRYHLSGQVLADKLLKNGWILQHKSHTDGPAKVFTHSDYAGEIGLIMPYEKNFCASCNRLRVSAKGKLHLCLFGEEGIELRDLLQSHEQQAILQARIFAALQGKREHHYLHIGDTGVRNHLASIGG.

The region spanning 17 to 243 (PFQRQYYYLR…HKSHTDGPAK (227 aa)) is the Radical SAM core domain. A GTP-binding site is contributed by Arg26. 2 residues coordinate [4Fe-4S] cluster: Cys33 and Cys37. Tyr39 provides a ligand contact to S-adenosyl-L-methionine. Cys40 provides a ligand contact to [4Fe-4S] cluster. GTP is bound at residue Arg76. S-adenosyl-L-methionine is bound at residue Gly80. Position 107 (Thr107) interacts with GTP. Residue Ser131 participates in S-adenosyl-L-methionine binding. Lys168 lines the GTP pocket. Position 202 (Met202) interacts with S-adenosyl-L-methionine. Positions 265 and 268 each coordinate [4Fe-4S] cluster. 270–272 (RLR) serves as a coordination point for GTP. [4Fe-4S] cluster is bound at residue Cys282.

This sequence belongs to the radical SAM superfamily. MoaA family. Monomer and homodimer. [4Fe-4S] cluster is required as a cofactor.

It carries out the reaction GTP + AH2 + S-adenosyl-L-methionine = (8S)-3',8-cyclo-7,8-dihydroguanosine 5'-triphosphate + 5'-deoxyadenosine + L-methionine + A + H(+). Its pathway is cofactor biosynthesis; molybdopterin biosynthesis. Catalyzes the cyclization of GTP to (8S)-3',8-cyclo-7,8-dihydroguanosine 5'-triphosphate. This Haemophilus influenzae (strain PittEE) protein is GTP 3',8-cyclase.